A 176-amino-acid chain; its full sequence is Protein GrpE (176 aa).

The disordered stretch occupies residues 1-28 (MSEQKQEFENENAENSEHLQDENLQNIE).

Belongs to the GrpE family. As to quaternary structure, homodimer.

It localises to the cytoplasm. Functionally, participates actively in the response to hyperosmotic and heat shock by preventing the aggregation of stress-denatured proteins, in association with DnaK and GrpE. It is the nucleotide exchange factor for DnaK and may function as a thermosensor. Unfolded proteins bind initially to DnaJ; upon interaction with the DnaJ-bound protein, DnaK hydrolyzes its bound ATP, resulting in the formation of a stable complex. GrpE releases ADP from DnaK; ATP binding to DnaK triggers the release of the substrate protein, thus completing the reaction cycle. Several rounds of ATP-dependent interactions between DnaJ, DnaK and GrpE are required for fully efficient folding. This is Protein GrpE from Campylobacter jejuni subsp. jejuni serotype O:2 (strain ATCC 700819 / NCTC 11168).